The chain runs to 89 residues: Otospiralin (89 aa).

The N-terminal stretch at 1–21 (MQACMVPGLALCLLLGPLAGA) is a signal peptide.

It belongs to the otospiralin family. In terms of tissue distribution, ear specific.

It is found in the secreted. Functionally, may be essential for the survival of the neurosensory epithelium of the inner ear. The protein is Otospiralin (OTOS) of Homo sapiens (Human).